Here is a 126-residue protein sequence, read N- to C-terminus: Interleukin-18-binding protein (126 aa).

Residues 1-16 (MRILFLIAFMYGCVHS) form the signal peptide.

This sequence belongs to the orthopoxvirus OPG022 family.

The protein localises to the secreted. Its function is as follows. Soluble IL18-binding protein that may modulate the host antiviral response. In Cynomys gunnisoni (Gunnison's prairie dog), this protein is Interleukin-18-binding protein (OPG022).